The sequence spans 354 residues: MTKNQDRMKSHTMELPRQIVVGEKNINEFGEFLHNLTKPKKVSLISGIHVKKVLRQRIEKSLKTKRIKFVWHTSKDNQISTLNRIEKEVKKDRSDMIAGIGGGRSVDTAKLISFNLDIPFVSVPTAASHDGVSSPFVSVKSDKPHSIVATAPLGVFVDIDIIKKAPSRLLASGCGDLVANIIAVKDWQLGHQKTGEYYGTYSAELAMMSAMMVLDNSSKYAKNGLDARVIVEALISAGVASCIAGSSRPCSGAEHLFSHALDKIAPGKGLHGEKCGIGSIMIAKLQGQDWKKIVKTLKDVGAPTTAKQIGLTEDQIIDALIIAQDLRPERYTILKEVEMTDRKAKSLAKSTKVI.

Residues 103 to 107 (GRSVD) and 125 to 128 (TAAS) each bind NAD(+). Asp130 contacts substrate. Ser134 serves as a coordination point for NAD(+). Asp176 contacts substrate. Asp176 and His255 together coordinate Zn(2+). His259 is a binding site for substrate. His271 contributes to the Zn(2+) binding site.

The protein belongs to the glycerol-1-phosphate dehydrogenase family. Homodimer. The cofactor is Zn(2+).

The protein localises to the cytoplasm. It carries out the reaction sn-glycerol 1-phosphate + NAD(+) = dihydroxyacetone phosphate + NADH + H(+). It catalyses the reaction sn-glycerol 1-phosphate + NADP(+) = dihydroxyacetone phosphate + NADPH + H(+). Its pathway is membrane lipid metabolism; glycerophospholipid metabolism. Catalyzes the NAD(P)H-dependent reduction of dihydroxyacetonephosphate (DHAP or glycerone phosphate) to glycerol 1-phosphate (G1P). The G1P thus generated is used as the glycerophosphate backbone of phospholipids in the cellular membranes of Archaea. This is Glycerol-1-phosphate dehydrogenase [NAD(P)+] from Nitrosopumilus maritimus (strain SCM1).